Reading from the N-terminus, the 690-residue chain is MLPRGRPRAMGAAVLLLLLLLVVGFFLFGRDPDYGLGTTATLDEDPYRSRNLSASSPQLLLPPKCEMLHVAIVCAGYNSSREIITLTKSLLFYRKNPLHLHLITDAVARNILETLFRTWMVPAVVVSFYDAEELKPLVSWIPNKHYSGLYGLMKLVLPSILPPSLARVIVLDTDVTFSSDIVELWALFDHFSDKQVVGLVENQSDWYLGNLWKNHRPWPALGRGFNTGVILLWLDRLQQTGWEQMWKVTAKRELLTLMATSLADQDIFNAVIKEHPHLVHPLPCVWNVQLSDHTRAERCYLEAADLKVIHWNSPKKLRVKNKHAEFFRNLHLTFLGYDGKLLRRELFGCPNQFPPGAEQLQQALTQLDEEEPCFEFRQQQLTVHRVHITFLPHQPPPPQPHDVTLVAQLSMDRLQMLEALCRHWPGPMSLALYLTDEEAQQFLHFVETSPVLSMRKDVAYHVVYRDGPLYPVNQLRNVALAQALTPYVFLSDIDFLPAYSLYDYLRASIEQLELDSRRKTALVVPAFETLHYRFSFPNSKAELLTLLDAGSLHTFRYHEWPQGHSSTDYSRWREAQAPYSVQWSADYEPYVVVPRDCPRYDPRFVGFGWNKVAHIIELDAQEYEFLVLPEAFSIHLPHAPSLDISRFRSSPTYRNCLQALKEEFHQDLSRRYGSAALKYLTALQQARSRA.

Topologically, residues 1-8 (MLPRGRPR) are cytoplasmic. Residues 9–29 (AMGAAVLLLLLLLVVGFFLFG) form a helical; Signal-anchor for type II membrane protein membrane-spanning segment. The Lumenal segment spans residues 30 to 690 (RDPDYGLGTT…TALQQARSRA (661 aa)). Asn51 and Asn78 each carry an N-linked (GlcNAc...) asparagine glycan. Residues 68–343 (LHVAIVCAGY…FLGYDGKLLR (276 aa)) are xylosyltransferase activity. 2 residues coordinate Mn(2+): Asp172 and Asp174. Asn202 carries an N-linked (GlcNAc...) asparagine glycan. A glucuronyltransferase activity region spans residues 344 to 686 (RELFGCPNQF…LKYLTALQQA (343 aa)). Asp492 and Asp494 together coordinate Mn(2+).

This sequence in the C-terminal section; belongs to the glycosyltransferase 49 family. In the N-terminal section; belongs to the glycosyltransferase 8 family. The protein belongs to the glycosyltransferase 8 family. As to quaternary structure, interacts with B4GAT1. Mn(2+) serves as cofactor. Highly expressed in the testis and kidney, but weakly expressed in the heart and brain. Expressed during embryogenesis from 7 dpc.

It localises to the golgi apparatus membrane. The catalysed reaction is 3-O-[beta-D-GlcA-(1-&gt;3)-beta-D-Xyl-(1-&gt;4)-Rib-ol-P-Rib-ol-P-3-beta-D-GalNAc-(1-&gt;3)-beta-D-GlcNAc-(1-&gt;4)-(O-6-P-alpha-D-Man)]-Thr-[protein] + UDP-alpha-D-xylose = 3-O-[alpha-D-Xyl-(1-&gt;3)-beta-D-GlcA-(1-&gt;4)-beta-D-Xyl-(1-&gt;4)-Rib-ol-P-Rib-ol-P-3-beta-D-GalNAc-(1-&gt;3)-beta-D-GlcNAc-(1-&gt;4)-(O-6-P-alpha-D-Man)]-Thr-[protein] + UDP + H(+). It carries out the reaction 3-O-{(1-&gt;[3)-alpha-D-Xyl-(1-&gt;3)-beta-D-GlcA-(1-&gt;](n)-4)-beta-D-Xyl-(1-&gt;4)-Rib-ol-P-Rib-ol-P-3-beta-D-GalNAc-(1-&gt;3)-beta-D-GlcNAc-(1-&gt;4)-O-6-P-alpha-D-Man}-L-Thr-[protein] + UDP-alpha-D-glucuronate = 3-O-{beta-D-GlcA-(1-&gt;[3)-alpha-D-Xyl-(1-&gt;3)-beta-D-GlcA-(1-&gt;](n)-4)-beta-D-Xyl-(1-&gt;4)-Rib-ol-P-Rib-ol-P-3-beta-D-GalNAc-(1-&gt;3)-beta-D-GlcNAc-(1-&gt;4)-O-6-P-alpha-D-Man}-L-Thr-[protein] + UDP + H(+). The enzyme catalyses 3-O-{beta-D-GlcA-(1-&gt;[3)-alpha-D-Xyl-(1-&gt;3)-beta-D-GlcA-(1-&gt;](n)-4)-beta-D-Xyl-(1-&gt;4)-Rib-ol-P-Rib-ol-P-3-beta-D-GalNAc-(1-&gt;3)-beta-D-GlcNAc-(1-&gt;4)-O-6-P-alpha-D-Man}-L-Thr-[protein] + UDP-alpha-D-xylose = 3-O-{(1-&gt;[3)-alpha-D-Xyl-(1-&gt;3)-beta-D-GlcA-(1-&gt;](n+1)-4)-beta-D-Xyl-(1-&gt;4)-Rib-ol-P-Rib-ol-P-3-beta-D-GalNAc-(1-&gt;3)-beta-D-GlcNAc-(1-&gt;4)-O-6-P-alpha-D-Man}-L-Thr-[protein] + UDP + H(+). The protein operates within protein modification; protein glycosylation. Functionally, bifunctional glycosyltransferase with both alpha-1,3-xylosyltransferase and beta-1,3-glucuronyltransferase activities involved in the maturation of alpha-dystroglycan (DAG1) by glycosylation leading to DAG1 binding to laminin G-like domain-containing extracellular proteins with high affinity and in a phosphorylated-O-mannosyl trisaccharide dependent manner. Elongates the glucuronyl-beta-1,4-xylose-beta disaccharide primer structure by adding repeating units [-3-Xylose-alpha-1,3-GlcA-beta-1-] to produce a heteropolysaccharide. Supports the maturation of DAG1 more effectively than LARGE1. In addition, can modify both heparan sulfate (HS)- and chondroitin/dermatan sulfate (CS/DS)-proteoglycans (PGs), namely GPC4, with a glycosaminoglycan (GAG)-like polysaccharide composed of xylose and glucuronic acid to confer laminin binding. This Mus musculus (Mouse) protein is Xylosyl- and glucuronyltransferase LARGE2.